Reading from the N-terminus, the 415-residue chain is UDP-N-acetylmuramoylalanine--D-glutamate ligase (415 aa).

ATP is bound at residue 91 to 97; the sequence is GTDGKST.

The protein belongs to the MurCDEF family.

It is found in the cytoplasm. The enzyme catalyses UDP-N-acetyl-alpha-D-muramoyl-L-alanine + D-glutamate + ATP = UDP-N-acetyl-alpha-D-muramoyl-L-alanyl-D-glutamate + ADP + phosphate + H(+). The protein operates within cell wall biogenesis; peptidoglycan biosynthesis. In terms of biological role, cell wall formation. Catalyzes the addition of glutamate to the nucleotide precursor UDP-N-acetylmuramoyl-L-alanine (UMA). The polypeptide is UDP-N-acetylmuramoylalanine--D-glutamate ligase (Aquifex aeolicus (strain VF5)).